The primary structure comprises 389 residues: MLLEIARWLSDDVRAIGVLEYITMRAVLACATALLIGLVAGPRVIRKLTEMKIGQAVRAYGPESHLVKTGTPTMGGALILIAVAISTLLWADWTNRFVWVVLLVTFGFGWIGWMDDYRKVVYRDPEGMPARQKFFWQATIGLVAAVYLAFAVSAPANTELWPLFKAWVSSGFAMPLPTRADLIVPFFKSVSYPLGVLGFVALTWAVIVGTSNAVNLTDGLDGLAIMPTVMVGSALGIFAYVVGRVDYSKYLLFPYIPGAAELMVLCAAIAGAGLAFLWFNAYPAQVFMGDVGALALGGALGTIAVIVRQEIVLFIMGGVFVVETLSVMMQVTWFKYTKRKYGQGRRIFRMAPLHHHFEVGGWKETQVVVRFWIISMMLVLIGLSTLKLR.

11 helical membrane-spanning segments follow: residues 21–41, 71–91, 97–117, 134–154, 167–187, 190–210, 222–242, 259–279, 286–306, 311–331, and 366–386; these read YITM…LVAG, TPTM…LLWA, FVWV…MDDY, FFWQ…AVSA, WVSS…VPFF, VSYP…IVGT, GLAI…AYVV, AAEL…FLWF, VFMG…IAVI, IVLF…MMQV, and QVVV…LSTL.

The protein belongs to the glycosyltransferase 4 family. MraY subfamily. Mg(2+) is required as a cofactor.

Its subcellular location is the cell inner membrane. It catalyses the reaction UDP-N-acetyl-alpha-D-muramoyl-L-alanyl-gamma-D-glutamyl-meso-2,6-diaminopimeloyl-D-alanyl-D-alanine + di-trans,octa-cis-undecaprenyl phosphate = di-trans,octa-cis-undecaprenyl diphospho-N-acetyl-alpha-D-muramoyl-L-alanyl-D-glutamyl-meso-2,6-diaminopimeloyl-D-alanyl-D-alanine + UMP. It functions in the pathway cell wall biogenesis; peptidoglycan biosynthesis. In terms of biological role, catalyzes the initial step of the lipid cycle reactions in the biosynthesis of the cell wall peptidoglycan: transfers peptidoglycan precursor phospho-MurNAc-pentapeptide from UDP-MurNAc-pentapeptide onto the lipid carrier undecaprenyl phosphate, yielding undecaprenyl-pyrophosphoryl-MurNAc-pentapeptide, known as lipid I. The sequence is that of Phospho-N-acetylmuramoyl-pentapeptide-transferase from Bordetella petrii (strain ATCC BAA-461 / DSM 12804 / CCUG 43448).